Reading from the N-terminus, the 237-residue chain is uncharacterized protein (237 aa).

An ATP-binding site is contributed by 21 to 28 (GCDGSGKS).

It to E.coli YghR and YghT.

This is an uncharacterized protein from Escherichia coli (strain K12).